The primary structure comprises 401 residues: Chalcone synthase 2 (401 aa).

Residue Cys-168 is part of the active site.

It belongs to the thiolase-like superfamily. Chalcone/stilbene synthases family.

It carries out the reaction (E)-4-coumaroyl-CoA + 3 malonyl-CoA + 3 H(+) = 2',4,4',6'-tetrahydroxychalcone + 3 CO2 + 4 CoA. It functions in the pathway secondary metabolite biosynthesis; flavonoid biosynthesis. The primary product of this enzyme is 4,2',4',6'-tetrahydroxychalcone (also termed naringenin-chalcone or chalcone) which can under specific conditions spontaneously isomerize into naringenin. This chain is Chalcone synthase 2 (CHS2), found in Sorghum bicolor (Sorghum).